We begin with the raw amino-acid sequence, 127 residues long: RxLR effector protein CRE6 (127 aa).

The signal sequence occupies residues 1–19; the sequence is MIRNALLVLVFVLIGTISA. The RxLR-dEER signature appears at 48 to 67; sequence RLLRQGSVKEGGVHDATEER.

It belongs to the RxLR effector family.

It localises to the secreted. It is found in the host cell. Effector that is involved in host plant infection. Contributes to virulence during the early infection stage, by inhibiting plant defense responses induced by both PAMP-triggered immunity (PTI) and effector-triggered immunity (ETI). The polypeptide is RxLR effector protein CRE6 (Phytophthora infestans (strain T30-4) (Potato late blight agent)).